Reading from the N-terminus, the 426-residue chain is MENIFKEKEKGKEKAKEEEKENDSGDLFDSEDEGTEDYKKGGYHPVKVGEVYKSNYRIVKKLGWGHFSTVWLAIDEKNGGREVALKIVKSASHYREAAEDEIHLLQTISEGDPESKYCVVKLLDSFLHTGPHGKHICMVFEKLGSNLLDLIKLHNYKGIPLPLVKCMTKQILIGLDYLHTKCKIIHTDLKPENVLLDHLLRPDTLNWDDQFLDGASSSSPISNDAENARQTRSGKIKWEPSARIADSLSRKIVKVPIVKIADLGTACWTHKHFTDDVQTRQYRCPEVILGQKWDTTIDMWSLACMVFELATGDLLFCPKKGDKYDKTDDHLALMIELLGRMPRSFITKGSKSEKYFNSKGELKYIRKLGPQWGMSDVLYEKYRFPKEEADKLSAFLLPMLQYEPEKRATARDSLEHPYMADVPPFL.

A compositionally biased stretch (basic and acidic residues) spans 1–23; it reads MENIFKEKEKGKEKAKEEEKEND. Residues 1 to 40 are disordered; it reads MENIFKEKEKGKEKAKEEEKENDSGDLFDSEDEGTEDYKK. The span at 24–35 shows a compositional bias: acidic residues; sequence SGDLFDSEDEGT. Positions 56–419 constitute a Protein kinase domain; sequence YRIVKKLGWG…ARDSLEHPYM (364 aa). ATP contacts are provided by residues 62–70 and Lys-86; that span reads LGWGHFSTV. Catalysis depends on Asp-188, which acts as the Proton acceptor. Residues 318–328 carry the Nuclear localization signal motif; the sequence is PKKGDKYDKTD.

Belongs to the protein kinase superfamily. CMGC Ser/Thr protein kinase family.

Its subcellular location is the nucleus. The enzyme catalyses L-seryl-[protein] + ATP = O-phospho-L-seryl-[protein] + ADP + H(+). It catalyses the reaction L-threonyl-[protein] + ATP = O-phospho-L-threonyl-[protein] + ADP + H(+). Its function is as follows. Phosphorylates serine/arginine-rich protein PSR. The chain is Serine/threonine-protein kinase SRPK from Physarum polycephalum (Slime mold).